Reading from the N-terminus, the 229-residue chain is MYDISGWKHVFKLDPNKELSDEHLEMICESGTDAVIVGGSDGVTIDNVLHMLVSIRRYAVPCVLEVSDVEAITPGFDFYYIPSVLNSRKVEWVTGVHHEALKEFGDIMDWDEIFMEGYCVLNPEAKVAQLTDAKCDVTEDDVIAYARLADKLLRLPIFYLEYSGTYGDVELVKNVKAELKQAKLYYGGGISNAEQAKEMAQHADTVVVGNIIYDDIKAALKTVKAVKGE.

Lysine 12 serves as a coordination point for sn-glycerol 1-phosphate. Mg(2+) contacts are provided by aspartate 14 and serine 40. Residues 159–164 (YLEYSG), glycine 189, and 209–210 (GN) contribute to the sn-glycerol 1-phosphate site.

This sequence belongs to the GGGP/HepGP synthase family. Group I subfamily. In terms of assembly, homodimer. The cofactor is Mg(2+).

The catalysed reaction is sn-glycerol 1-phosphate + all-trans-heptaprenyl diphosphate = 3-heptaprenyl-sn-glycero-1-phosphate + diphosphate. It functions in the pathway membrane lipid metabolism; glycerophospholipid metabolism. In terms of biological role, prenyltransferase that catalyzes in vivo the transfer of the heptaprenyl moiety of heptaprenyl pyrophosphate (HepPP; 35 carbon atoms) to the C3 hydroxyl of sn-glycerol-1-phosphate (G1P), producing heptaprenylglyceryl phosphate (HepGP). This reaction is an ether-bond-formation step in the biosynthesis of archaea-type G1P-based membrane lipids found in Bacillales. This chain is Heptaprenylglyceryl phosphate synthase, found in Bacillus anthracis (strain A0248).